The following is a 200-amino-acid chain: NAD(P)H dehydrogenase (quinone) (200 aa).

Residues 4–191 form the Flavodoxin-like domain; it reads VLVLYYSSYG…DIARYQGKHV (188 aa). Residues 10–15 and 79–81 contribute to the FMN site; these read SSYGHV and TRF. Tyrosine 12 is an NAD(+) binding site. Tryptophan 99 serves as a coordination point for substrate. FMN is bound by residues 114–120 and histidine 135; that span reads STGTQHG.

This sequence belongs to the WrbA family. FMN serves as cofactor.

The catalysed reaction is a quinone + NADH + H(+) = a quinol + NAD(+). It catalyses the reaction a quinone + NADPH + H(+) = a quinol + NADP(+). In Burkholderia cenocepacia (strain ATCC BAA-245 / DSM 16553 / LMG 16656 / NCTC 13227 / J2315 / CF5610) (Burkholderia cepacia (strain J2315)), this protein is NAD(P)H dehydrogenase (quinone).